Here is a 474-residue protein sequence, read N- to C-terminus: Cryptochrome DASH (474 aa).

Positions 2–136 (DTAVVWFRDD…ALRQRWTHTL (135 aa)) constitute a Photolyase/cryptochrome alpha/beta domain. Residues 161-171 (EAAATVRDPRS) show a composition bias toward basic and acidic residues. A disordered region spans residues 161 to 202 (EAAATVRDPRSAPETVPTPDGLTPGPVPTVESLGVSEPPTDD).

This sequence belongs to the DNA photolyase class-1 family. Requires FAD as cofactor. It depends on (6R)-5,10-methylene-5,6,7,8-tetrahydrofolate as a cofactor.

Functionally, may have a photoreceptor function. Binds DNA; probably functions as a transcriptional repressor. The sequence is that of Cryptochrome DASH (cry) from Natronomonas pharaonis (strain ATCC 35678 / DSM 2160 / CIP 103997 / JCM 8858 / NBRC 14720 / NCIMB 2260 / Gabara) (Halobacterium pharaonis).